The chain runs to 165 residues: Small ribosomal subunit protein uS5 (165 aa).

An S5 DRBM domain is found at 10–73 (QIEKLISLNR…TSARKNLRFV (64 aa)).

It belongs to the universal ribosomal protein uS5 family. As to quaternary structure, part of the 30S ribosomal subunit. Contacts proteins S4 and S8.

In terms of biological role, with S4 and S12 plays an important role in translational accuracy. Functionally, located at the back of the 30S subunit body where it stabilizes the conformation of the head with respect to the body. This is Small ribosomal subunit protein uS5 from Borreliella burgdorferi (strain ATCC 35210 / DSM 4680 / CIP 102532 / B31) (Borrelia burgdorferi).